The chain runs to 309 residues: Ribosomal RNA large subunit methyltransferase F (309 aa).

This sequence belongs to the methyltransferase superfamily. METTL16/RlmF family.

It is found in the cytoplasm. The enzyme catalyses adenosine(1618) in 23S rRNA + S-adenosyl-L-methionine = N(6)-methyladenosine(1618) in 23S rRNA + S-adenosyl-L-homocysteine + H(+). In terms of biological role, specifically methylates the adenine in position 1618 of 23S rRNA. This Cronobacter sakazakii (strain ATCC BAA-894) (Enterobacter sakazakii) protein is Ribosomal RNA large subunit methyltransferase F.